Consider the following 335-residue polypeptide: N-lysine methyltransferase KMT5A-A (335 aa).

2 disordered regions span residues 1–91 (MGRG…EVEK) and 133–183 (LPPE…EIES). Basic and acidic residues predominate over residues 67–91 (SVTHHESKCLGKPSTETRKKAEVEK). Positions 145 to 161 (VKNKPLRKKTQRQKSPN) are enriched in basic residues. The 122-residue stretch at 199 to 320 (EGIKMHMITG…VGEELLYDYG (122 aa)) folds into the SET domain. S-adenosyl-L-methionine is bound by residues 209–211 (KGR), Tyr-254, and 281–282 (NH).

The protein belongs to the class V-like SAM-binding methyltransferase superfamily. Histone-lysine methyltransferase family. PR/SET subfamily.

It localises to the nucleus. The protein resides in the chromosome. The catalysed reaction is L-lysyl(20)-[histone H4] + S-adenosyl-L-methionine = N(6)-methyl-L-lysyl(20)-[histone H4] + S-adenosyl-L-homocysteine + H(+). It carries out the reaction L-lysyl-[protein] + S-adenosyl-L-methionine = N(6)-methyl-L-lysyl-[protein] + S-adenosyl-L-homocysteine + H(+). In terms of biological role, protein-lysine N-methyltransferase that monomethylates both histones and non-histone proteins. Specifically monomethylates 'Lys-20' of histone H4 (H4K20me1). H4K20me1 is enriched during mitosis and represents a specific tag for epigenetic transcriptional repression. Mainly functions in euchromatin regions, thereby playing a central role in the silencing of euchromatic genes. Required for cell proliferation, probably by contributing to the maintenance of proper higher-order structure of DNA during mitosis. Involved in chromosome condensation and proper cytokinesis. This is N-lysine methyltransferase KMT5A-A from Xenopus laevis (African clawed frog).